Here is a 305-residue protein sequence, read N- to C-terminus: uncharacterized protein (305 aa).

The tract at residues Ala-267–Ala-287 is disordered.

The protein belongs to the DnaB/DnaD family.

This is an uncharacterized protein from Listeria innocua serovar 6a (strain ATCC BAA-680 / CLIP 11262).